Reading from the N-terminus, the 90-residue chain is uncharacterized protein (90 aa).

The chain crosses the membrane as a helical span at residues 32 to 52 (IIINLIPLVLLFAFFCPCIYF).

The protein localises to the membrane. This is an uncharacterized protein from Schizosaccharomyces pombe (strain 972 / ATCC 24843) (Fission yeast).